We begin with the raw amino-acid sequence, 368 residues long: Cyclin-dependent kinase 2 (368 aa).

In terms of domain architecture, Protein kinase spans 45-330 (FCSLRRIGEG…AKGALSHRYF (286 aa)). Residues 51–59 (IGEGTYGVV) and Lys-74 contribute to the ATP site. Asp-170 serves as the catalytic Proton acceptor. Mg(2+) is bound by residues Asn-175 and Asp-188.

Belongs to the protein kinase superfamily. CMGC Ser/Thr protein kinase family. CDC2/CDKX subfamily. Interacts with cye-1; the interaction likely regulates cdk-2 activity and is probably required for gld-1 phosphorylation. Mg(2+) is required as a cofactor.

It catalyses the reaction L-seryl-[protein] + ATP = O-phospho-L-seryl-[protein] + ADP + H(+). The catalysed reaction is L-threonyl-[protein] + ATP = O-phospho-L-threonyl-[protein] + ADP + H(+). Functionally, serine/threonine-protein kinase which, in association with cye-1, regulates proliferation, quiescent state and cell fate during the development of several cell lineages. In the embryo, initiates the establishment of cell polarity through the recruitment of the centrosomal proteins spd-2 and spd-5 during prophase. Phosphorylation and inhibition of the translational repressor gld-1 by the cdk-2/cye-1 complex regulates the pool of germline stem cells and the size of the mitotic zone in the gonads by preventing entry into meiosis. The sequence is that of Cyclin-dependent kinase 2 from Caenorhabditis elegans.